We begin with the raw amino-acid sequence, 436 residues long: 3-ketoacyl-CoA thiolase (436 aa).

Catalysis depends on cysteine 99, which acts as the Acyl-thioester intermediate. Active-site proton acceptor residues include histidine 392 and cysteine 422.

It belongs to the thiolase-like superfamily. Thiolase family. In terms of assembly, heterotetramer of two alpha chains (FadJ) and two beta chains (FadI).

The protein localises to the cytoplasm. The catalysed reaction is an acyl-CoA + acetyl-CoA = a 3-oxoacyl-CoA + CoA. It functions in the pathway lipid metabolism; fatty acid beta-oxidation. Functionally, catalyzes the final step of fatty acid oxidation in which acetyl-CoA is released and the CoA ester of a fatty acid two carbons shorter is formed. The protein is 3-ketoacyl-CoA thiolase of Escherichia coli O81 (strain ED1a).